The following is a 91-amino-acid chain: Small ribosomal subunit protein bS18 (91 aa).

This sequence belongs to the bacterial ribosomal protein bS18 family. Part of the 30S ribosomal subunit. Forms a tight heterodimer with protein bS6.

Binds as a heterodimer with protein bS6 to the central domain of the 16S rRNA, where it helps stabilize the platform of the 30S subunit. The sequence is that of Small ribosomal subunit protein bS18 from Thiobacillus denitrificans (strain ATCC 25259 / T1).